The chain runs to 724 residues: Ribosomal protein S6 kinase alpha-1 (724 aa).

Ser54 carries the post-translational modification Phosphoserine. The region spanning 62–310 (FELLKVLGQG…AEEIKRHIFY (249 aa)) is the Protein kinase 1 domain. ATP contacts are provided by residues 68-76 (LGQGSFGKV) and Lys94. The active-site Proton acceptor is Asp187. The residue at position 221 (Ser221) is a Phosphoserine; by PDPK1. Ser296 carries the phosphoserine modification. The AGC-kinase C-terminal domain occupies 311 to 380 (STIDWNKLYR…VATGLMEDDG (70 aa)). Thr348 carries the post-translational modification Phosphothreonine. Phosphoserine occurs at positions 352, 358, and 369. Residues 407 to 664 (YVVKETIGVG…AKQVLQHPWI (258 aa)) enclose the Protein kinase 2 domain. Residues 413-421 (IGVGSYSVC) and Lys436 contribute to the ATP site. Asp524 (proton acceptor) is an active-site residue. At Thr562 the chain carries Phosphothreonine. Ser721 is subject to Phosphoserine.

Belongs to the protein kinase superfamily. AGC Ser/Thr protein kinase family. S6 kinase subfamily. Forms a complex with either MAPK1/ERK2 or MAPK3/ERK1 in quiescent cells. Transiently dissociates following mitogenic stimulation. Interacts with ETV1/ER81 and FGFR1. Requires Mg(2+) as cofactor. Activated by phosphorylation at Ser-221 by PDPK1. Autophosphorylated on Ser-369, as part of the activation process. May be phosphorylated at Thr-348 and Ser-352 by MAPK1/ERK2 and MAPK3/ERK1. Post-translationally, N-terminal myristoylation results in an activated kinase in the absence of added growth factors. Intestine, thymus, and lung.

It is found in the nucleus. It localises to the cytoplasm. It catalyses the reaction L-seryl-[protein] + ATP = O-phospho-L-seryl-[protein] + ADP + H(+). It carries out the reaction L-threonyl-[protein] + ATP = O-phospho-L-threonyl-[protein] + ADP + H(+). Upon extracellular signal or mitogen stimulation, phosphorylated at Thr-562 in the C-terminal kinase domain (CTKD) by MAPK1/ERK2 and MAPK3/ERK1. The activated CTKD then autophosphorylates Ser-369, allowing binding of PDPK1, which in turn phosphorylates Ser-221 in the N-terminal kinase domain (NTDK) leading to the full activation of the protein and subsequent phosphorylation of the substrates by the NTKD. Serine/threonine-protein kinase that acts downstream of ERK (MAPK1/ERK2 and MAPK3/ERK1) signaling and mediates mitogenic and stress-induced activation of the transcription factors CREB1, ETV1/ER81 and NR4A1/NUR77, regulates translation through RPS6 and EIF4B phosphorylation, and mediates cellular proliferation, survival, and differentiation by modulating mTOR signaling and repressing pro-apoptotic function of BAD and DAPK1. In fibroblast, is required for EGF-stimulated phosphorylation of CREB1, which results in the subsequent transcriptional activation of several immediate-early genes. In response to mitogenic stimulation (EGF and PMA), phosphorylates and activates NR4A1/NUR77 and ETV1/ER81 transcription factors and the cofactor CREBBP. Upon insulin-derived signal, acts indirectly on the transcription regulation of several genes by phosphorylating GSK3B at 'Ser-9' and inhibiting its activity. Phosphorylates RPS6 in response to serum or EGF via an mTOR-independent mechanism and promotes translation initiation by facilitating assembly of the pre-initiation complex. In response to insulin, phosphorylates EIF4B, enhancing EIF4B affinity for the EIF3 complex and stimulating cap-dependent translation. Is involved in the mTOR nutrient-sensing pathway by directly phosphorylating TSC2 at 'Ser-1798', which potently inhibits TSC2 ability to suppress mTOR signaling, and mediates phosphorylation of RPTOR, which regulates mTORC1 activity and may promote rapamycin-sensitive signaling independently of the PI3K/AKT pathway. Also involved in feedback regulation of mTORC1 and mTORC2 by phosphorylating DEPTOR. Mediates cell survival by phosphorylating the pro-apoptotic proteins BAD and DAPK1 and suppressing their pro-apoptotic function. Promotes the survival of hepatic stellate cells by phosphorylating CEBPB in response to the hepatotoxin carbon tetrachloride (CCl4). Mediates induction of hepatocyte prolifration by TGFA through phosphorylation of CEBPB. Is involved in cell cycle regulation by phosphorylating the CDK inhibitor CDKN1B, which promotes CDKN1B association with 14-3-3 proteins and prevents its translocation to the nucleus and inhibition of G1 progression. Phosphorylates EPHA2 at 'Ser-897', the RPS6KA-EPHA2 signaling pathway controls cell migration. In response to mTORC1 activation, phosphorylates EIF4B at 'Ser-406' and 'Ser-422' which stimulates bicarbonate cotransporter SLC4A7 mRNA translation, increasing SLC4A7 protein abundance and function. The protein is Ribosomal protein S6 kinase alpha-1 (Rps6ka1) of Mus musculus (Mouse).